The chain runs to 489 residues: Glutamyl-tRNA(Gln) amidotransferase subunit A (489 aa).

Residues K79 and S158 each act as charge relay system in the active site. Residue S182 is the Acyl-ester intermediate of the active site.

The protein belongs to the amidase family. GatA subfamily. Heterotrimer of A, B and C subunits.

It carries out the reaction L-glutamyl-tRNA(Gln) + L-glutamine + ATP + H2O = L-glutaminyl-tRNA(Gln) + L-glutamate + ADP + phosphate + H(+). In terms of biological role, allows the formation of correctly charged Gln-tRNA(Gln) through the transamidation of misacylated Glu-tRNA(Gln) in organisms which lack glutaminyl-tRNA synthetase. The reaction takes place in the presence of glutamine and ATP through an activated gamma-phospho-Glu-tRNA(Gln). The chain is Glutamyl-tRNA(Gln) amidotransferase subunit A from Anaplasma marginale (strain Florida).